Here is a 348-residue protein sequence, read N- to C-terminus: Dihydroorotase (348 aa).

Zn(2+)-binding residues include histidine 14 and histidine 16. Substrate is bound by residues 16–18 (HLR) and asparagine 42. 3 residues coordinate Zn(2+): lysine 100, histidine 137, and histidine 175. Position 100 is an N6-carboxylysine (lysine 100). Residue histidine 137 coordinates substrate. Leucine 220 serves as a coordination point for substrate. Position 248 (aspartate 248) interacts with Zn(2+). The active site involves aspartate 248. Histidine 252 and alanine 264 together coordinate substrate.

The protein belongs to the metallo-dependent hydrolases superfamily. DHOase family. Class II DHOase subfamily. As to quaternary structure, homodimer. Zn(2+) serves as cofactor.

The enzyme catalyses (S)-dihydroorotate + H2O = N-carbamoyl-L-aspartate + H(+). It functions in the pathway pyrimidine metabolism; UMP biosynthesis via de novo pathway; (S)-dihydroorotate from bicarbonate: step 3/3. In terms of biological role, catalyzes the reversible cyclization of carbamoyl aspartate to dihydroorotate. This is Dihydroorotase from Pseudomonas fluorescens (strain ATCC BAA-477 / NRRL B-23932 / Pf-5).